We begin with the raw amino-acid sequence, 541 residues long: Sorting nexin-27 (541 aa).

Residues Met1 to Ser26 are disordered. Residues Asn17–Ser26 are compositionally biased toward gly residues. Residues Val43–Pro136 enclose the PDZ domain. 2 positions are modified to phosphoserine: Ser51 and Ser62. A PX domain is found at Gln161–Tyr269. The Ras-associating domain occupies Ser273–Phe362. Residues Ser273 to Phe362 are FERM-like region F1. Residues Asn373–Cys421 form an FERM-like region F2 region. Positions Asn425–Lys525 are FERM-like region F3.

In terms of assembly, core component of the SNX27-retromer, a multiprotein complex composed of SNX27, the WASH complex and the retromer complex. Interacts (via PDZ domain) with a number of target transmembrane proteins (via PDZ-binding motif): ABCC4, ADRB2, ARHGEF7, GRIA1, GRIA2, GRIN1, GRIN2A GRIN2C, KCNJ6, KCNJ9 and SLC2A1/GLUT1. Interacts (via the FERM-like regions) with the WASH complex. Interacts with SNX1. Interacts with CYTIP. Interacts with DGKZ. Interacts with MCC. Interacts (via PDZ domains) with SLC9A3; directs SLC9A3 membrane insertion from early endosomes to the plasma membrane.

The protein localises to the early endosome membrane. It localises to the cytoplasm. The protein resides in the cytosol. In terms of biological role, involved in the retrograde transport from endosome to plasma membrane, a trafficking pathway that promotes the recycling of internalized transmembrane proteins. Following internalization, endocytosed transmembrane proteins are delivered to early endosomes and recycled to the plasma membrane instead of being degraded in lysosomes. SNX27 specifically binds and directs sorting of a subset of transmembrane proteins containing a PDZ-binding motif at the C-terminus: following interaction with target transmembrane proteins, associates with the retromer complex, preventing entry into the lysosomal pathway, and promotes retromer-tubule based plasma membrane recycling. SNX27 also binds with the WASH complex. Interacts with membranes containing phosphatidylinositol-3-phosphate (PtdIns(3P)). May participate in establishment of natural killer cell polarity. Recruits CYTIP to early endosomes. The polypeptide is Sorting nexin-27 (SNX27) (Bos taurus (Bovine)).